The sequence spans 562 residues: Catalase T (562 aa).

Catalysis depends on residues His-64 and Asn-137. Tyr-351 is a binding site for heme.

Belongs to the catalase family. As to quaternary structure, homotetramer. It depends on heme as a cofactor.

The protein localises to the cytoplasm. The enzyme catalyses 2 H2O2 = O2 + 2 H2O. In terms of biological role, occurs in almost all aerobically respiring organisms and serves to protect cells from the toxic effects of hydrogen peroxide. The polypeptide is Catalase T (CTT1) (Saccharomyces cerevisiae (strain YJM789) (Baker's yeast)).